The chain runs to 456 residues: Serine--tRNA ligase (456 aa).

252–254 (TSE) serves as a coordination point for L-serine. ATP is bound by residues 283 to 285 (RKE) and Val-299. Glu-306 contacts L-serine. 370-373 (ELVS) contributes to the ATP binding site. Thr-404 serves as a coordination point for L-serine.

This sequence belongs to the class-II aminoacyl-tRNA synthetase family. Type-1 seryl-tRNA synthetase subfamily. Homodimer. The tRNA molecule binds across the dimer.

The protein resides in the cytoplasm. The catalysed reaction is tRNA(Ser) + L-serine + ATP = L-seryl-tRNA(Ser) + AMP + diphosphate + H(+). It carries out the reaction tRNA(Sec) + L-serine + ATP = L-seryl-tRNA(Sec) + AMP + diphosphate + H(+). The protein operates within aminoacyl-tRNA biosynthesis; selenocysteinyl-tRNA(Sec) biosynthesis; L-seryl-tRNA(Sec) from L-serine and tRNA(Sec): step 1/1. Functionally, catalyzes the attachment of serine to tRNA(Ser). Is also able to aminoacylate tRNA(Sec) with serine, to form the misacylated tRNA L-seryl-tRNA(Sec), which will be further converted into selenocysteinyl-tRNA(Sec). The polypeptide is Serine--tRNA ligase (Korarchaeum cryptofilum (strain OPF8)).